A 466-amino-acid chain; its full sequence is 23S rRNA (uracil(1939)-C(5))-methyltransferase RlmD (466 aa).

One can recognise a TRAM domain in the interval 1 to 54 (MVDVLNIESLDLEARGIAHRDGKVLFVEGALPGERVTVQTVRRKPSYEIAKVEE). [4Fe-4S] cluster is bound by residues C67, C73, C76, and C155. Q264, F293, N298, E314, N342, and D363 together coordinate S-adenosyl-L-methionine. C393 (nucleophile) is an active-site residue.

This sequence belongs to the class I-like SAM-binding methyltransferase superfamily. RNA M5U methyltransferase family. RlmD subfamily.

It carries out the reaction uridine(1939) in 23S rRNA + S-adenosyl-L-methionine = 5-methyluridine(1939) in 23S rRNA + S-adenosyl-L-homocysteine + H(+). In terms of biological role, catalyzes the formation of 5-methyl-uridine at position 1939 (m5U1939) in 23S rRNA. The sequence is that of 23S rRNA (uracil(1939)-C(5))-methyltransferase RlmD from Bordetella pertussis (strain Tohama I / ATCC BAA-589 / NCTC 13251).